The primary structure comprises 271 residues: tRNA (guanine-N(7)-)-methyltransferase (271 aa).

Positions 1–52 are disordered; it reads MSDSHHTPEAASASLRHVRAKGEPRFPDGPKADPAGSHFERRIRSFQPRRSR. Positions 20–31 are enriched in basic and acidic residues; sequence AKGEPRFPDGPK. S-adenosyl-L-methionine contacts are provided by Glu93, Asp118, Asp145, and Asp168. Asp168 is an active-site residue. Substrate is bound by residues Lys172, Asp204, and 241-244; that span reads TRFE.

It belongs to the class I-like SAM-binding methyltransferase superfamily. TrmB family.

It carries out the reaction guanosine(46) in tRNA + S-adenosyl-L-methionine = N(7)-methylguanosine(46) in tRNA + S-adenosyl-L-homocysteine. It functions in the pathway tRNA modification; N(7)-methylguanine-tRNA biosynthesis. Functionally, catalyzes the formation of N(7)-methylguanine at position 46 (m7G46) in tRNA. This is tRNA (guanine-N(7)-)-methyltransferase from Streptomyces coelicolor (strain ATCC BAA-471 / A3(2) / M145).